The chain runs to 399 residues: L-asparaginase-like protein GE13669 (399 aa).

Residues 1–22 (MLAQSCCLRLLILLLLFKSTCS) form the signal peptide. Cystine bridges form between C90–C95, C189–C205, and C344–C371.

The protein belongs to the Ntn-hydrolase family.

The polypeptide is L-asparaginase-like protein GE13669 (Drosophila yakuba (Fruit fly)).